The following is a 105-amino-acid chain: Large ribosomal subunit protein bL21c (105 aa).

Belongs to the bacterial ribosomal protein bL21 family. In terms of assembly, part of the 50S ribosomal subunit.

Its subcellular location is the plastid. It localises to the chloroplast. In terms of biological role, this protein binds to 23S rRNA. The protein is Large ribosomal subunit protein bL21c of Thalassiosira pseudonana (Marine diatom).